A 382-amino-acid polypeptide reads, in one-letter code: Polyadenylate-binding protein 5 (382 aa).

RRM domains are found at residues 18 to 96 (AALY…WSQP), 106 to 182 (GNIF…RFKF), 199 to 276 (TNVF…RAQK), and 302 to 378 (VPIY…LGQA).

It localises to the cytoplasm. Binds the poly(A) tail of mRNA. May be involved in cytoplasmic regulatory processes of mRNA metabolism. Can probably bind to cytoplasmic RNA sequences other than poly(A) in vivo. In Macaca mulatta (Rhesus macaque), this protein is Polyadenylate-binding protein 5 (PABPC5).